Here is a 387-residue protein sequence, read N- to C-terminus: Lipid-A-disaccharide synthase (387 aa).

This sequence belongs to the LpxB family.

The enzyme catalyses 2-N,3-O-bis[(3R)-3-hydroxytetradecanoyl]-alpha-D-glucosaminyl 1-phosphate + UDP-2-N,3-O-bis[(3R)-3-hydroxytetradecanoyl]-alpha-D-glucosamine = lipid A disaccharide (E. coli) + UDP + H(+). It carries out the reaction a lipid X + a UDP-2-N,3-O-bis[(3R)-3-hydroxyacyl]-alpha-D-glucosamine = a lipid A disaccharide + UDP + H(+). It functions in the pathway glycolipid biosynthesis; lipid IV(A) biosynthesis; lipid IV(A) from (3R)-3-hydroxytetradecanoyl-[acyl-carrier-protein] and UDP-N-acetyl-alpha-D-glucosamine: step 5/6. Functionally, condensation of UDP-2,3-diacylglucosamine and 2,3-diacylglucosamine-1-phosphate to form lipid A disaccharide, a precursor of lipid A, a phosphorylated glycolipid that anchors the lipopolysaccharide to the outer membrane of the cell. The chain is Lipid-A-disaccharide synthase from Blochmanniella pennsylvanica (strain BPEN).